A 761-amino-acid chain; its full sequence is MSTVEEDSDTVTVETVNSVTFTQDTDGNLILHCPQNDPDEVDSEDSTEPPHKRLCLSSEDDQSIDDATPCISVVALPLSENDQSFEVTMTATTEVADDELSEGTVTQIQILQNDQLDEISPLGTEEVSAVSQAWFTTKEDKDSLTNKGHKWKQGMWSKEEIDILMNNIERYLKARGIKDATEIIFEMSKDERKDFYRTIAWGLNRPLFAVYRRVLRMYDDRNHVGKYTPEEIEKLKELRIKHGNDWATIGAALGRSASSVKDRCRLMKDTCNTGKWTEEEEKRLAEVVHELTSTEPGDIVTQGVSWAAVAERVGTRSEKQCRSKWLNYLNWKQSGGTEWTKEDEINLILRIAELDVADENDINWDLLAEGWSSVRSPQWLRSKWWTIKRQIANHKDVSFPVLIKGLKQLHENQKNNPVLLENKSGSGVPNSNCNSSVQHVQIRVARLEDNTAISPSPMAALQIPVQITHVSSTDSPAASVDSETITLNSGTLQTFEILPSFHLQPTGTPGTYLLQTSSSQGLPLTLTTNPTVTLAAAAPASPEQIIVHALSPEHLLNTSDNVTVQCHTPRVIIQTVATEDITSSLSQEELTVDSDLHSSDFPEPPDALEADTFPDEIPRPKMTIQPSFNNAHVSKFSDQNSTELMNSVMVRTEEEIADTDLKQEEPPSDLASAYVTEDLESPTIVHQVHQTIDDETILIVPSPHGFIQASDVIDTESVLPLTTLTDPIFQHHQEASNIIGSSLGSPVSEDSKDVEDLVNCH.

Residues 1 to 237 (MSTVEEDSDT…TPEEIEKLKE (237 aa)) are interaction with CCND2. The disordered stretch occupies residues 24-51 (DTDGNLILHCPQNDPDEVDSEDSTEPPH). The segment covering 37–47 (DPDEVDSEDST) has biased composition (acidic residues). Positions 87 to 170 (VTMTATTEVA…IDILMNNIER (84 aa)) are required for transcriptional activation. The tract at residues 87-458 (VTMTATTEVA…DNTAISPSPM (372 aa)) is required for DNA-binding. The interaction with CCND1, CCND2 and CCND3 stretch occupies residues 176 to 761 (GIKDATEIIF…KDVEDLVNCH (586 aa)). In terms of domain architecture, Myb-like 1 spans 225 to 263 (GKYTPEEIEKLKELRIKHGNDWATIGAALGRSASSVKDR). Residues 268–333 (KDTCNTGKWT…KWLNYLNWKQ (66 aa)) enclose the HTH myb-type domain. Positions 306–329 (WAAVAERVGTRSEKQCRSKWLNYL) form a DNA-binding region, H-T-H motif. The Myb-like 2 domain maps to 339–388 (WTKEDEINLILRIAELDVADENDINWDLLAEGWSSVRSPQWLRSKWWTIK). The tract at residues 459-761 (AALQIPVQIT…KDVEDLVNCH (303 aa)) is required for transcriptional activation. Disordered stretches follow at residues 584-625 (SLSQ…MTIQ) and 740-761 (GSSLGSPVSEDSKDVEDLVNCH).

This sequence belongs to the DMTF1 family. Interacts with the D-type cyclins CCND1, CCND2 and CCND3. Interaction with D-type cyclins may modulate transcriptional activation by this protein. In terms of processing, phosphorylated by the cyclin-D2/CDK4, cyclin-D3/CDK4 and cyclin-D2/CDK6 complexes and to a lesser extent by the cyclin-D1/CDK4 complex. As to expression, ubiquitously expressed (at mRNA level). Expressed in brain, intestine, kidney, lung, pancreas, skin, spleen and tongue (at protein level). Expressed at high levels in testis and thymus (at protein level). In all tissues examined, expression is predominant in non-proliferating and differentiated cell types. These include epithelial, interstitial and smooth muscle cells of the intestine, differentiated spermatids, sperm and interstitial cells of the testis, and lymphoid cells of the medullary compartment of the thymus.

The protein localises to the nucleus. Transcriptional activator which activates the CDKN2A/ARF locus in response to Ras-Raf signaling, thereby promoting p53/TP53-dependent growth arrest. May also cooperate with MYB to activate transcription of the ANPEP gene. Binds to the consensus sequence 5'-CCCG[GT]ATGT-3'. The protein is Cyclin-D-binding Myb-like transcription factor 1 (Dmtf1) of Mus musculus (Mouse).